Here is a 388-residue protein sequence, read N- to C-terminus: Succinate--CoA ligase [ADP-forming] subunit beta (388 aa).

The region spanning 9–244 (KKLFAEYGLP…PSQDDPREAH (236 aa)) is the ATP-grasp domain. ATP contacts are provided by residues Lys46, 53–55 (GRG), Glu99, Thr102, and Glu107. Residues Asn199 and Asp213 each coordinate Mg(2+). Substrate is bound by residues Asn264 and 321–323 (GIV).

The protein belongs to the succinate/malate CoA ligase beta subunit family. In terms of assembly, heterotetramer of two alpha and two beta subunits. Mg(2+) is required as a cofactor.

It carries out the reaction succinate + ATP + CoA = succinyl-CoA + ADP + phosphate. It catalyses the reaction GTP + succinate + CoA = succinyl-CoA + GDP + phosphate. It participates in carbohydrate metabolism; tricarboxylic acid cycle; succinate from succinyl-CoA (ligase route): step 1/1. Functionally, succinyl-CoA synthetase functions in the citric acid cycle (TCA), coupling the hydrolysis of succinyl-CoA to the synthesis of either ATP or GTP and thus represents the only step of substrate-level phosphorylation in the TCA. The beta subunit provides nucleotide specificity of the enzyme and binds the substrate succinate, while the binding sites for coenzyme A and phosphate are found in the alpha subunit. This Aeromonas salmonicida (strain A449) protein is Succinate--CoA ligase [ADP-forming] subunit beta.